The chain runs to 504 residues: Pentatricopeptide repeat-containing protein At5g16640, mitochondrial (504 aa).

Residues 1 to 43 (MRRSISSKAKSFLHRNLLYSGNSGTSPSSSFSICGFCFSRRAY) constitute a mitochondrion transit peptide. PPR repeat units follow at residues 45–79 (NGSDYREMLRNGIRFMKLDDSLDLFFHMVQCRPLP), 80–114 (SIADFSRLLSAISKMKKYDVVIYLWEQMQMLGIPH), 115–149 (NLCTCNILLNCFCRCSQLSLALSFLGKMIKLGHEP), 150–184 (SIVTFGSLLNGFCRGDRVYDALYMFDQMVGMGYKP), 185–219 (NVVIYNTIIDGLCKSKQVDNALDLLNRMEKDGIGP), 220–254 (DVVTYNSLISGLCSSGRWSDATRMVSCMTKREIYP), 255–289 (DVFTFNALIDACVKEGRVSEAEEFYEEMIRRSLDP), 290–324 (DIVTYSLLIYGLCMYSRLDEAEEMFGFMVSKGCFP), 325–359 (DVVTYSILINGYCKSKKVEHGMKLFCEMSQRGVVR), 360–394 (NTVTYTILIQGYCRAGKLNVAEEIFRRMVFCGVHP), 395–429 (NIITYNVLLHGLCDNGKIEKALVILADMQKNGMDA), 430–464 (DIVTYNIIIRGMCKAGEVADAWDIYCSLNCQGLMP), and 465–499 (DIWTYTTMMLGLYKKGLRREADALFRKMKEDGILP).

This sequence belongs to the PPR family. P subfamily.

The protein resides in the mitochondrion. This Arabidopsis thaliana (Mouse-ear cress) protein is Pentatricopeptide repeat-containing protein At5g16640, mitochondrial.